The chain runs to 248 residues: Probable transcriptional regulatory protein Smed_2641 (248 aa).

The protein belongs to the TACO1 family.

It is found in the cytoplasm. The chain is Probable transcriptional regulatory protein Smed_2641 from Sinorhizobium medicae (strain WSM419) (Ensifer medicae).